Here is a 171-residue protein sequence, read N- to C-terminus: Protein TIFY 11d (171 aa).

A Tify domain is found at 65 to 100; that stretch reads PSAGTAPLTIFYDGRMVVVDDVPVEKAAELMRLAGS. The Jas signature appears at 117 to 142; it reads PIARKASLQRFLQKRKHRITTTSEPY. The Nuclear localization signal motif lies at 119 to 126; it reads ARKASLQR.

The protein belongs to the TIFY/JAZ family. As to quaternary structure, interacts with BHLH148 and COI1A. Interacts with COI1A, COI1B and COI2 in a coronatine-dependent manner. Coronatine is an analog of jasmonoyl isoleucine (JA-Ile). Post-translationally, ubiquitinated. Increase in jasmonoyl isoleucine (JA-Ile) levels mediates its degradation via COI1A-mediated proteasome pathway.

It is found in the nucleus. Functionally, repressor of jasmonate (JA) responses. May act on an initial response of JA-regulated gene expression toward drought tolerance as part of a BHLH148-TIFY11D/JAZ12-COI1A complex. This chain is Protein TIFY 11d, found in Oryza sativa subsp. japonica (Rice).